Consider the following 337-residue polypeptide: Palmitoyltransferase ZDHHC15 (337 aa).

The Cytoplasmic portion of the chain corresponds to 1–20 (MRRGWKMALSGGLRCCRRVL). A helical transmembrane segment spans residues 21-41 (SWVPVLVIVLVVLWSYYAYVF). Topologically, residues 42–56 (ELCLVTVLSPAEKVI) are lumenal. The chain crosses the membrane as a helical span at residues 57 to 77 (YLILYHAIFVFFTWTYWKSIF). At 78–172 (TLPQQPNQKF…NNCIGFSNYK (95 aa)) the chain is on the cytoplasmic side. The DHHC domain maps to 129–179 (RFCDRCHLIKPDRCHHCSVCAMCVLKMDHHCPWVNNCIGFSNYKFFLQFLA). Residues Cys-131, Cys-134, His-144, Cys-145, Cys-148, Cys-151, and His-158 each contribute to the Zn(2+) site. Cys-159 serves as the catalytic S-palmitoyl cysteine intermediate. Cys-165 contacts Zn(2+). The helical transmembrane segment at 173–193 (FFLQFLAYSVLYCLYIATTVF) threads the bilayer. The Lumenal portion of the chain corresponds to 194 to 210 (SYFIKYWRGELPSVRSK). Residues 211 to 234 (FHVLFLLFVACMFFVSLVILFGYH) traverse the membrane as a helical segment. Topologically, residues 235–337 (CWLVSRNKTT…SSSLAVETET (103 aa)) are cytoplasmic. The disordered stretch occupies residues 306–337 (PLLANEETWEDNEDDNQDYPEGSSSLAVETET). The segment covering 312–323 (ETWEDNEDDNQD) has biased composition (acidic residues). A compositionally biased stretch (polar residues) spans 327 to 337 (GSSSLAVETET).

Belongs to the DHHC palmitoyltransferase family. In terms of processing, autopalmitoylated (in vitro). As to expression, expressed in placenta, liver, lung, kidney, heart and brain.

The protein localises to the golgi apparatus membrane. The protein resides in the postsynaptic density. The catalysed reaction is L-cysteinyl-[protein] + hexadecanoyl-CoA = S-hexadecanoyl-L-cysteinyl-[protein] + CoA. The enzyme catalyses L-cysteinyl-[protein] + tetradecanoyl-CoA = S-tetradecanoyl-L-cysteinyl-[protein] + CoA. It catalyses the reaction L-cysteinyl-[protein] + octadecanoyl-CoA = S-octadecanoyl-L-cysteinyl-[protein] + CoA. Functionally, palmitoyltransferase that catalyzes the addition of palmitate onto various protein substrates. Has no stringent fatty acid selectivity and in addition to palmitate can also transfer onto target proteins myristate from tetradecanoyl-CoA and stearate from octadecanoyl-CoA. Palmitoylates IGF2R and SORT1, promoting their partitioning to an endosomal membrane subdomain where they can interact with the retromer cargo-selective complex. Thereby, regulates retrograde transport from endosomes to the Golgi apparatus of these lysosomal sorting receptors and plays a role in trafficking of lysosomal proteins. In the nervous system, catalyzes the palmitoylation of DLG4/PSD95 and regulates its synaptic clustering and function in synaptogenesis. Could be involved in the differentiation of dopaminergic neurons and the development of the diencephalon. Could also catalyze the palmitoylation of GAP43. Could also palmitoylate DNAJC5 and regulate its localization to the Golgi membrane. Could also palmitoylate FYN as shown in vitro. May palmitoylate CALHM3 subunit of gustatory voltage-gated ion channels and modulate channel gating and kinetics. The polypeptide is Palmitoyltransferase ZDHHC15 (Homo sapiens (Human)).